Here is a 182-residue protein sequence, read N- to C-terminus: MSDQVLSALEHFFLRWQRDGEARRGLPLCEWEADWRSPCELDEPREGRVAWRPHQRQQAADFAAMANALELVLHPAAQALFGHWFSRPIPCSYKGLRLEIILPWNEADLNLLRENLIGHLLMLRKLKRTPSLFIATTRNEMTLVSLDNESGQVWLEWLDSGRRLTLAPSLPAFLERLETLPH.

This sequence belongs to the Syd family.

The protein resides in the cell inner membrane. Its function is as follows. Interacts with the SecY protein in vivo. May bind preferentially to an uncomplexed state of SecY, thus functioning either as a chelating agent for excess SecY in the cell or as a regulatory factor that negatively controls the translocase function. This chain is Protein Syd, found in Aeromonas salmonicida (strain A449).